A 592-amino-acid polypeptide reads, in one-letter code: MVSLQVSPLSQTLILAFLLPQALPAGVFELQIHSFGPGPGLGTPRSPCNARGPCRLFFRVCLKPGVSQEATESLCALGAALSTSVPVYTEHPGESAAALPLPDGLVRVPFRDAWPGTFSLVIETWREQLGEHAGGPAWNLLARVVGRRRLAAGGPWARDVQRTGTWELHFSYRARCEPPAVGAACARLCRSRSAPSRCGPGLRPCTPFPDECEAPSVCRPGCSPEHGYCEEPDECRCLEGWTGPLCTVPVSTSSCLNSRVPGPASTGCLLPGPGPCDGNPCANGGSCSETSGSFECACPRGFYGLRCEVSGVTCADGPCFNGGLCVGGEDPDSAYVCHCPPGFQGSNCEKRVDRCSLQPCQNGGLCLDLGHALRCRCRAGFAGPRCEHDLDDCAGRACANGGTCVEGGGSRRCSCALGFGGRDCRERADPCASRPCAHGGRCYAHFSGLVCACAPGYMGVRCEFAVRPDGADAVPAAPRGLRQADPQRFLLPPALGLLVAAGLAGAALLVIHVRRRGPGQDTGTRLLSGTREPSVHTLPDALNNLRLQDGAGDGPSSSADWNHPEDGDSRSIYVIPAPSIYAREDWLIQVLF.

Residues 1–32 form the signal peptide; that stretch reads MVSLQVSPLSQTLILAFLLPQALPAGVFELQI. The Extracellular portion of the chain corresponds to 33–490; it reads HSFGPGPGLG…LRQADPQRFL (458 aa). The region spanning 174–213 is the DSL domain; the sequence is ARCEPPAVGAACARLCRSRSAPSRCGPGLRPCTPFPDECE. 6 EGF-like domains span residues 214–247, 272–308, 310–349, 351–387, 389–425, and 427–463; these read APSV…PLCT, GPGP…LRCE, SGVT…SNCE, RVDR…PRCE, DLDD…RDCR, and RADP…VRCE. Cystine bridges form between Cys-218–Cys-229, Cys-222–Cys-235, Cys-237–Cys-246, Cys-276–Cys-287, Cys-281–Cys-296, Cys-298–Cys-307, Cys-314–Cys-325, Cys-319–Cys-337, Cys-339–Cys-348, Cys-355–Cys-366, Cys-360–Cys-375, Cys-377–Cys-386, Cys-393–Cys-404, Cys-398–Cys-413, Cys-415–Cys-424, Cys-431–Cys-442, Cys-436–Cys-451, and Cys-453–Cys-462. A helical transmembrane segment spans residues 491 to 511; sequence LPPALGLLVAAGLAGAALLVI. The Cytoplasmic portion of the chain corresponds to 512-592; sequence HVRRRGPGQD…REDWLIQVLF (81 aa). Residues 548 to 567 are disordered; sequence QDGAGDGPSSSADWNHPEDG.

In terms of assembly, can bind and activate Notch-1 or another Notch receptor. Post-translationally, ubiquitinated by MIB (MIB1 or MIB2), leading to its endocytosis and subsequent degradation. As to expression, predominantly expressed in the neuroectoderm and paraxial mesoderm during embryogenesis.

Its subcellular location is the membrane. Inhibits primary neurogenesis. May be required to divert neurons along a specific differentiation pathway. Plays a role in the formation of somite boundaries during segmentation of the paraxial mesoderm. This chain is Delta-like protein 3 (Dll3), found in Mus musculus (Mouse).